The sequence spans 272 residues: Putative pyruvate, phosphate dikinase regulatory protein 2 (272 aa).

G154–T161 contributes to the ADP binding site.

It belongs to the pyruvate, phosphate/water dikinase regulatory protein family. PDRP subfamily.

The catalysed reaction is N(tele)-phospho-L-histidyl/L-threonyl-[pyruvate, phosphate dikinase] + ADP = N(tele)-phospho-L-histidyl/O-phospho-L-threonyl-[pyruvate, phosphate dikinase] + AMP + H(+). It carries out the reaction N(tele)-phospho-L-histidyl/O-phospho-L-threonyl-[pyruvate, phosphate dikinase] + phosphate + H(+) = N(tele)-phospho-L-histidyl/L-threonyl-[pyruvate, phosphate dikinase] + diphosphate. In terms of biological role, bifunctional serine/threonine kinase and phosphorylase involved in the regulation of the pyruvate, phosphate dikinase (PPDK) by catalyzing its phosphorylation/dephosphorylation. This is Putative pyruvate, phosphate dikinase regulatory protein 2 from Staphylococcus epidermidis (strain ATCC 35984 / DSM 28319 / BCRC 17069 / CCUG 31568 / BM 3577 / RP62A).